Reading from the N-terminus, the 120-residue chain is Glycine cleavage system H protein (120 aa).

Residues 20 to 102 form the Lipoyl-binding domain; it reads DGTVGISDHA…YEGGWLFKLD (83 aa). The residue at position 61 (Lys-61) is an N6-lipoyllysine.

This sequence belongs to the GcvH family. The glycine cleavage system is composed of four proteins: P, T, L and H. Requires (R)-lipoate as cofactor.

Functionally, the glycine cleavage system catalyzes the degradation of glycine. The H protein shuttles the methylamine group of glycine from the P protein to the T protein. The sequence is that of Glycine cleavage system H protein from Deinococcus radiodurans (strain ATCC 13939 / DSM 20539 / JCM 16871 / CCUG 27074 / LMG 4051 / NBRC 15346 / NCIMB 9279 / VKM B-1422 / R1).